Consider the following 241-residue polypeptide: MSEGLNVGIVVFPGSNCDRDVAYVTREILQWPTQLLWHEETDLGDYDLIVLPGGFSFGDYLRCGAIARFSPIMAAVKDHAAAGKWVLGICNGFQILTEAKLLPGALVRNRDLHFICDRVHLRLEAKERPWLRAYGDKTVIRLPIAHGEGCYYADATTLAELEANRQVLFRYADAQGNVTPESNPNGSLNNIAGICNAAGNVLGMMPHPERAADPALSHSPSEHTLDGLQLFQSLLLASAFA.

Residues 6–241 (NVGIVVFPGS…QSLLLASAFA (236 aa)) form the Glutamine amidotransferase type-1 domain. Residue Cys90 is the Nucleophile of the active site. Residues His207 and Glu209 contribute to the active site.

In terms of assembly, part of the FGAM synthase complex composed of 1 PurL, 1 PurQ and 2 PurS subunits.

The protein resides in the cytoplasm. It carries out the reaction N(2)-formyl-N(1)-(5-phospho-beta-D-ribosyl)glycinamide + L-glutamine + ATP + H2O = 2-formamido-N(1)-(5-O-phospho-beta-D-ribosyl)acetamidine + L-glutamate + ADP + phosphate + H(+). It catalyses the reaction L-glutamine + H2O = L-glutamate + NH4(+). The protein operates within purine metabolism; IMP biosynthesis via de novo pathway; 5-amino-1-(5-phospho-D-ribosyl)imidazole from N(2)-formyl-N(1)-(5-phospho-D-ribosyl)glycinamide: step 1/2. In terms of biological role, part of the phosphoribosylformylglycinamidine synthase complex involved in the purines biosynthetic pathway. Catalyzes the ATP-dependent conversion of formylglycinamide ribonucleotide (FGAR) and glutamine to yield formylglycinamidine ribonucleotide (FGAM) and glutamate. The FGAM synthase complex is composed of three subunits. PurQ produces an ammonia molecule by converting glutamine to glutamate. PurL transfers the ammonia molecule to FGAR to form FGAM in an ATP-dependent manner. PurS interacts with PurQ and PurL and is thought to assist in the transfer of the ammonia molecule from PurQ to PurL. In Thermosynechococcus vestitus (strain NIES-2133 / IAM M-273 / BP-1), this protein is Phosphoribosylformylglycinamidine synthase subunit PurQ.